Consider the following 385-residue polypeptide: 4-hydroxy-3-methylbut-2-en-1-yl diphosphate synthase (flavodoxin) 1 (385 aa).

4 residues coordinate [4Fe-4S] cluster: Cys-280, Cys-283, Cys-315, and Glu-322.

Belongs to the IspG family. It depends on [4Fe-4S] cluster as a cofactor.

It carries out the reaction (2E)-4-hydroxy-3-methylbut-2-enyl diphosphate + oxidized [flavodoxin] + H2O + 2 H(+) = 2-C-methyl-D-erythritol 2,4-cyclic diphosphate + reduced [flavodoxin]. It functions in the pathway isoprenoid biosynthesis; isopentenyl diphosphate biosynthesis via DXP pathway; isopentenyl diphosphate from 1-deoxy-D-xylulose 5-phosphate: step 5/6. Converts 2C-methyl-D-erythritol 2,4-cyclodiphosphate (ME-2,4cPP) into 1-hydroxy-2-methyl-2-(E)-butenyl 4-diphosphate. The sequence is that of 4-hydroxy-3-methylbut-2-en-1-yl diphosphate synthase (flavodoxin) 1 from Streptomyces avermitilis (strain ATCC 31267 / DSM 46492 / JCM 5070 / NBRC 14893 / NCIMB 12804 / NRRL 8165 / MA-4680).